A 339-amino-acid polypeptide reads, in one-letter code: Ketol-acid reductoisomerase (NADP(+)) (339 aa).

The KARI N-terminal Rossmann domain occupies 1–182 (MRVYYDRDAD…GGGRAGVIET (182 aa)). NADP(+) contacts are provided by residues 24–27 (YGSQ), Arg48, Ser51, Thr53, and 83–86 (DELQ). The active site involves His108. An NADP(+)-binding site is contributed by Gly134. The KARI C-terminal knotted domain maps to 183 to 328 (TFKEECETDL…KKLRSMMPWI (146 aa)). Residues Asp191, Glu195, Glu227, and Glu231 each coordinate Mg(2+). Ser252 serves as a coordination point for substrate.

This sequence belongs to the ketol-acid reductoisomerase family. Mg(2+) serves as cofactor.

It catalyses the reaction (2R)-2,3-dihydroxy-3-methylbutanoate + NADP(+) = (2S)-2-acetolactate + NADPH + H(+). It carries out the reaction (2R,3R)-2,3-dihydroxy-3-methylpentanoate + NADP(+) = (S)-2-ethyl-2-hydroxy-3-oxobutanoate + NADPH + H(+). It functions in the pathway amino-acid biosynthesis; L-isoleucine biosynthesis; L-isoleucine from 2-oxobutanoate: step 2/4. It participates in amino-acid biosynthesis; L-valine biosynthesis; L-valine from pyruvate: step 2/4. Its function is as follows. Involved in the biosynthesis of branched-chain amino acids (BCAA). Catalyzes an alkyl-migration followed by a ketol-acid reduction of (S)-2-acetolactate (S2AL) to yield (R)-2,3-dihydroxy-isovalerate. In the isomerase reaction, S2AL is rearranged via a Mg-dependent methyl migration to produce 3-hydroxy-3-methyl-2-ketobutyrate (HMKB). In the reductase reaction, this 2-ketoacid undergoes a metal-dependent reduction by NADPH to yield (R)-2,3-dihydroxy-isovalerate. The sequence is that of Ketol-acid reductoisomerase (NADP(+)) from Bartonella tribocorum (strain CIP 105476 / IBS 506).